The primary structure comprises 198 residues: Carnitine operon protein CaiE (198 aa).

A disordered region spans residues 179–198 (VEENRPRLKGTTDVKPKSAQ). A compositionally biased stretch (basic and acidic residues) spans 180 to 198 (EENRPRLKGTTDVKPKSAQ).

Belongs to the transferase hexapeptide repeat family.

Its pathway is amine and polyamine metabolism; carnitine metabolism. Functionally, overproduction of CaiE stimulates the activity of CaiB and CaiD. In Salmonella enteritidis PT4 (strain P125109), this protein is Carnitine operon protein CaiE.